A 249-amino-acid polypeptide reads, in one-letter code: Transcription repressor MYB5 (249 aa).

HTH myb-type domains follow at residues 20–72 (KMGM…MNYL) and 73–127 (RPSV…RKKL). DNA-binding regions (H-T-H motif) lie at residues 48–72 (WRSL…MNYL) and 100–123 (WSLI…NTHL). Positions 133–180 (DPQTHKPLDANNIHKPEEEVSGGQKYPLEPISSSHTDDTTVNGGDGDS) are disordered. The span at 135–150 (QTHKPLDANNIHKPEE) shows a compositional bias: basic and acidic residues.

As to quaternary structure, interacts with BHLH002/EGL3/MYC146, BHLH012/MYC1 and BHLH042/TT8. Siliques.

The protein resides in the nucleus. Its function is as follows. Transcription activator, when associated with BHLH002/EGL3/MYC146, BHLH012/MYC1 or BHLH042/TT8. In Arabidopsis thaliana (Mouse-ear cress), this protein is Transcription repressor MYB5 (MYB5).